We begin with the raw amino-acid sequence, 297 residues long: tRNA dimethylallyltransferase (297 aa).

10–17 (APTGAGKT) is an ATP binding site. Residue 12-17 (TGAGKT) participates in substrate binding. Residues 34 to 37 (DSRQ) are interaction with substrate tRNA.

This sequence belongs to the IPP transferase family. Monomer. Mg(2+) is required as a cofactor.

It catalyses the reaction adenosine(37) in tRNA + dimethylallyl diphosphate = N(6)-dimethylallyladenosine(37) in tRNA + diphosphate. Catalyzes the transfer of a dimethylallyl group onto the adenine at position 37 in tRNAs that read codons beginning with uridine, leading to the formation of N6-(dimethylallyl)adenosine (i(6)A). This is tRNA dimethylallyltransferase from Leptospira interrogans serogroup Icterohaemorrhagiae serovar Lai (strain 56601).